Reading from the N-terminus, the 347-residue chain is D-alanine--D-alanine ligase (347 aa).

One can recognise an ATP-grasp domain in the interval 134 to 332 (KLYAKDLGIK…LAQSLPKTPK (199 aa)). 161 to 216 (LINFNFPFIIKPNSAGSSLGVSVVKEEKELNYALDSAFEYSKEVLIEPFIQGVKEY) contributes to the ATP binding site. 3 residues coordinate Mg(2+): Asp-288, Glu-300, and Asn-302.

Belongs to the D-alanine--D-alanine ligase family. The cofactor is Mg(2+). Requires Mn(2+) as cofactor.

The protein resides in the cytoplasm. The enzyme catalyses 2 D-alanine + ATP = D-alanyl-D-alanine + ADP + phosphate + H(+). The protein operates within cell wall biogenesis; peptidoglycan biosynthesis. Its function is as follows. Cell wall formation. The sequence is that of D-alanine--D-alanine ligase from Helicobacter pylori (strain HPAG1).